The chain runs to 280 residues: Lysosome-associated membrane glycoprotein 5 (280 aa).

Residues 1-29 (MDLRRRALLGVDGLRVLLMLFHTVTRIMA) form the signal peptide. Topologically, residues 30 to 235 (EQEVENLSGL…PVDEREQLEE (206 aa)) are extracellular. N-linked (GlcNAc...) asparagine glycosylation is found at Asn35 and Asn53. A helical transmembrane segment spans residues 236–256 (TLPLILGLILGLVIVVTLVIY). Topologically, residues 257–280 (HIHHKMTANQVQIPRDRSQYKHMG) are cytoplasmic.

The protein belongs to the LAMP family. Post-translationally, glycosylated.

It is found in the cytoplasmic vesicle membrane. It localises to the cell membrane. The protein resides in the cell projection. Its subcellular location is the dendrite. The protein localises to the cytoplasmic vesicle. It is found in the secretory vesicle. It localises to the synaptic vesicle membrane. The protein resides in the growth cone membrane. Its subcellular location is the early endosome membrane. The protein localises to the recycling endosome. It is found in the endoplasmic reticulum-Golgi intermediate compartment membrane. It localises to the endosome membrane. Functionally, plays a role in short-term synaptic plasticity in a subset of GABAergic neurons in the brain. The protein is Lysosome-associated membrane glycoprotein 5 (LAMP5) of Bos taurus (Bovine).